We begin with the raw amino-acid sequence, 245 residues long: Ribonuclease PH (245 aa).

Phosphate is bound by residues Arg-86 and 124–126 (GTR).

It belongs to the RNase PH family. As to quaternary structure, homohexameric ring arranged as a trimer of dimers.

It catalyses the reaction tRNA(n+1) + phosphate = tRNA(n) + a ribonucleoside 5'-diphosphate. Phosphorolytic 3'-5' exoribonuclease that plays an important role in tRNA 3'-end maturation. Removes nucleotide residues following the 3'-CCA terminus of tRNAs; can also add nucleotides to the ends of RNA molecules by using nucleoside diphosphates as substrates, but this may not be physiologically important. Probably plays a role in initiation of 16S rRNA degradation (leading to ribosome degradation) during starvation. In Bacillus cereus (strain B4264), this protein is Ribonuclease PH.